A 232-amino-acid polypeptide reads, in one-letter code: Acetate--CoA ligase [ADP-forming] I subunit beta (232 aa).

Residues 27 to 63 (KEILKLYGIPVPEFKVARNEEEAVKFSGEIGYPVVMK) enclose the ATP-grasp domain. Residue 53-64 (SGEIGYPVVMKI) coordinates ATP.

The protein belongs to the acetate CoA ligase beta subunit family. In terms of assembly, heterotetramer of two alpha and two beta subunits.

It is found in the cytoplasm. It catalyses the reaction acetate + ATP + CoA = acetyl-CoA + ADP + phosphate. With respect to regulation, activity is dependent on magnesium. Catalyzes the reversible formation of acetate and ATP from acetyl-CoA by using ADP and phosphate. Can use other substrates such as isobutyryl-CoA, propionyl-CoA and butyryl-CoA, but not indoleacetyl-CoA, phenylacetyl-CoA or succinyl-CoA. Seems to be involved primarily in the conversion of acetyl-CoA to acetate. Participates in the degradation of branched-chain amino acids via branched-chain-acyl-CoA esters. This Pyrococcus furiosus (strain ATCC 43587 / DSM 3638 / JCM 8422 / Vc1) protein is Acetate--CoA ligase [ADP-forming] I subunit beta.